The chain runs to 306 residues: ORF-B protein (306 aa).

The next 3 membrane-spanning stretches (helical) occupy residues 92–112 (MIQW…FPFI), 120–140 (LTHL…VFGW), and 161–181 (VIEW…IVVS).

In terms of assembly, interacts with host RACK1.

It is found in the host cytoplasm. Its subcellular location is the host cell membrane. This chain is ORF-B protein, found in Sander vitreus (Walleye).